The primary structure comprises 307 residues: Ornithine carbamoyltransferase (307 aa).

Residues 54–57, Gln-81, Arg-105, and 132–135 each bind carbamoyl phosphate; these read STRT and HPCQ. Residues Asn-163, Asp-221, and 225–226 contribute to the L-ornithine site; that span reads SM. Residues 261–262 and Arg-289 each bind carbamoyl phosphate; that span reads CL.

Belongs to the aspartate/ornithine carbamoyltransferase superfamily. OTCase family.

The protein resides in the cytoplasm. It carries out the reaction carbamoyl phosphate + L-ornithine = L-citrulline + phosphate + H(+). It functions in the pathway amino-acid biosynthesis; L-arginine biosynthesis; L-arginine from L-ornithine and carbamoyl phosphate: step 1/3. In terms of biological role, reversibly catalyzes the transfer of the carbamoyl group from carbamoyl phosphate (CP) to the N(epsilon) atom of ornithine (ORN) to produce L-citrulline. This chain is Ornithine carbamoyltransferase, found in Aromatoleum aromaticum (strain DSM 19018 / LMG 30748 / EbN1) (Azoarcus sp. (strain EbN1)).